Reading from the N-terminus, the 383-residue chain is Acetylornithine deacetylase (383 aa).

His80 serves as a coordination point for Zn(2+). Residue Asp82 is part of the active site. Asp112 is a binding site for Zn(2+). Residue Glu144 is part of the active site. Residues Glu145, Glu169, and His355 each contribute to the Zn(2+) site.

The protein belongs to the peptidase M20A family. ArgE subfamily. Homodimer. Requires Zn(2+) as cofactor. The cofactor is Co(2+). Glutathione serves as cofactor.

The protein localises to the cytoplasm. The enzyme catalyses N(2)-acetyl-L-ornithine + H2O = L-ornithine + acetate. It functions in the pathway amino-acid biosynthesis; L-arginine biosynthesis; L-ornithine from N(2)-acetyl-L-ornithine (linear): step 1/1. Catalyzes the hydrolysis of the amide bond of N(2)-acetylated L-amino acids. Cleaves the acetyl group from N-acetyl-L-ornithine to form L-ornithine, an intermediate in L-arginine biosynthesis pathway, and a branchpoint in the synthesis of polyamines. This Klebsiella pneumoniae (strain 342) protein is Acetylornithine deacetylase.